Consider the following 203-residue polypeptide: dTTP/UTP pyrophosphatase (203 aa).

The active-site Proton acceptor is the Asp74.

This sequence belongs to the Maf family. YhdE subfamily. Requires a divalent metal cation as cofactor.

It is found in the cytoplasm. It carries out the reaction dTTP + H2O = dTMP + diphosphate + H(+). It catalyses the reaction UTP + H2O = UMP + diphosphate + H(+). In terms of biological role, nucleoside triphosphate pyrophosphatase that hydrolyzes dTTP and UTP. May have a dual role in cell division arrest and in preventing the incorporation of modified nucleotides into cellular nucleic acids. This chain is dTTP/UTP pyrophosphatase, found in Treponema denticola (strain ATCC 35405 / DSM 14222 / CIP 103919 / JCM 8153 / KCTC 15104).